Here is a 230-residue protein sequence, read N- to C-terminus: Type II restriction enzyme MjaV (230 aa).

The enzyme catalyses Endonucleolytic cleavage of DNA to give specific double-stranded fragments with terminal 5'-phosphates.. Its function is as follows. A P subtype restriction enzyme that recognizes the double-stranded sequence 5'-GTAC-3'; the cleavage site is unknown. In Methanocaldococcus jannaschii (strain ATCC 43067 / DSM 2661 / JAL-1 / JCM 10045 / NBRC 100440) (Methanococcus jannaschii), this protein is Type II restriction enzyme MjaV (mjaVR).